The sequence spans 142 residues: Large ribosomal subunit protein uL11 (142 aa).

It belongs to the universal ribosomal protein uL11 family. In terms of assembly, part of the ribosomal stalk of the 50S ribosomal subunit. Interacts with L10 and the large rRNA to form the base of the stalk. L10 forms an elongated spine to which L12 dimers bind in a sequential fashion forming a multimeric L10(L12)X complex. In terms of processing, one or more lysine residues are methylated.

Its function is as follows. Forms part of the ribosomal stalk which helps the ribosome interact with GTP-bound translation factors. The chain is Large ribosomal subunit protein uL11 from Rhodopseudomonas palustris (strain BisB18).